A 446-amino-acid chain; its full sequence is Transcription factor Sox-10 (446 aa).

3 disordered regions span residues 1–60 (MSDD…SEDE), 153–191 (RLRM…AEGG), and 203–264 (HLDH…IDFG). Over residues 36-48 (DDDDDDDEEEEEE) the composition is skewed to acidic residues. K52 is covalently cross-linked (Glycyl lysine isopeptide (Lys-Gly) (interchain with G-Cter in SUMO)). The tract at residues 56–96 (DSEDERFPVCIREAVSQVLNGYDWTLVPMPVRVNGGSKSKP) is dimerization (DIM). The HMG box DNA-binding region spans 98–166 (VKRPMNAFMV…QHKKDHPDYK (69 aa)). Positions 153–167 (RLRMQHKKDHPDYKY) are enriched in basic and acidic residues. Polar residues predominate over residues 213-226 (SDGNSEHSTGQSHG). The interval 217–303 (SEHSTGQSHG…NGHAGHPSHI (87 aa)) is transactivation domain (TAM). Positions 243–257 (SDGKRDGSHALREGG) are enriched in basic and acidic residues. Residues 337–446 (KAQVKTESSS…QPVYTTLSRP (110 aa)) are transactivation domain (TAC). K341 participates in a covalent cross-link: Glycyl lysine isopeptide (Lys-Gly) (interchain with G-Cter in SUMO). Positions 421–446 (SDPPSVAQSHSPTHWEQPVYTTLSRP) are disordered. A compositionally biased stretch (polar residues) spans 426–446 (VAQSHSPTHWEQPVYTTLSRP).

As to quaternary structure, interacts with the sumoylation factors ube2i/ubc9 and sumo1. Post-translationally, sumoylated. As to expression, first expressed at stages 13/14 at the lateral edges of the neural plate, in the neural crest forming region. By stage 22, neural crest cells migrate in the cranial region and strong expression is seen in the crest cells that populate the branchial arches as well as those migrating in the frontonasal region. Also strongly expressed in the trunk neural crest. Expression in the otic vesicle begins around stage 25 and persists until at least stage 40. At stage 30, expression is down-regulated in the cranial neural crest of the pharyngeal arches but persists in the trunk neural crest, in the otic vesicle and in discrete domains adjacent to the hindbrain. At stage 40, expression is restricted to the otic vesicle, differentiated pigment cells, and in several cranial ganglia.

The protein localises to the cytoplasm. Its subcellular location is the nucleus. Its function is as follows. Acts early in neural crest formation, functioning redundantly with the other group E Sox factors sox8 and sox9 to induce neural crest progenitors. Acts downstream of wnt-signaling at the neural plate border. Involved in the specification of neural crest progenitors fated to form the pigment cell lineage. This chain is Transcription factor Sox-10 (sox10), found in Xenopus laevis (African clawed frog).